The chain runs to 343 residues: Methionine import ATP-binding protein MetN (343 aa).

An ABC transporter domain is found at 2-241; sequence IKLSNITKVF…PKTPLAQKFI (240 aa). Position 38–45 (38–45) interacts with ATP; sequence GASGAGKS.

This sequence belongs to the ABC transporter superfamily. Methionine importer (TC 3.A.1.24) family. The complex is composed of two ATP-binding proteins (MetN), two transmembrane proteins (MetI) and a solute-binding protein (MetQ).

It is found in the cell inner membrane. It catalyses the reaction L-methionine(out) + ATP + H2O = L-methionine(in) + ADP + phosphate + H(+). The enzyme catalyses D-methionine(out) + ATP + H2O = D-methionine(in) + ADP + phosphate + H(+). Functionally, part of the ABC transporter complex MetNIQ involved in methionine import. Responsible for energy coupling to the transport system. The protein is Methionine import ATP-binding protein MetN of Shigella boydii serotype 4 (strain Sb227).